Here is a 384-residue protein sequence, read N- to C-terminus: Putative glutamate--cysteine ligase 2 (384 aa).

Belongs to the glutamate--cysteine ligase type 2 family. YbdK subfamily.

The enzyme catalyses L-cysteine + L-glutamate + ATP = gamma-L-glutamyl-L-cysteine + ADP + phosphate + H(+). Its function is as follows. ATP-dependent carboxylate-amine ligase which exhibits weak glutamate--cysteine ligase activity. This Dechloromonas aromatica (strain RCB) protein is Putative glutamate--cysteine ligase 2.